The primary structure comprises 433 residues: Glutamate-1-semialdehyde 2,1-aminomutase (433 aa).

The residue at position 273 (lysine 273) is an N6-(pyridoxal phosphate)lysine.

The protein belongs to the class-III pyridoxal-phosphate-dependent aminotransferase family. HemL subfamily. In terms of assembly, homodimer. Pyridoxal 5'-phosphate is required as a cofactor.

The protein localises to the cytoplasm. It carries out the reaction (S)-4-amino-5-oxopentanoate = 5-aminolevulinate. Its pathway is porphyrin-containing compound metabolism; protoporphyrin-IX biosynthesis; 5-aminolevulinate from L-glutamyl-tRNA(Glu): step 2/2. It participates in porphyrin-containing compound metabolism; chlorophyll biosynthesis. In Rippkaea orientalis (strain PCC 8801 / RF-1) (Cyanothece sp. (strain PCC 8801)), this protein is Glutamate-1-semialdehyde 2,1-aminomutase.